Reading from the N-terminus, the 207-residue chain is Ribonuclease HII (207 aa).

In terms of domain architecture, RNase H type-2 spans 12–201; it reads DLVAGVDEVG…VRAAWEAREG (190 aa). A divalent metal cation-binding residues include Asp18, Glu19, and Asp110.

Belongs to the RNase HII family. The cofactor is Mn(2+). Mg(2+) is required as a cofactor.

It localises to the cytoplasm. It catalyses the reaction Endonucleolytic cleavage to 5'-phosphomonoester.. Its function is as follows. Endonuclease that specifically degrades the RNA of RNA-DNA hybrids. The polypeptide is Ribonuclease HII (Pseudomonas putida (strain W619)).